Consider the following 380-residue polypeptide: Cobalt-precorrin-5B C(1)-methyltransferase (380 aa).

This sequence belongs to the CbiD family.

It carries out the reaction Co-precorrin-5B + S-adenosyl-L-methionine = Co-precorrin-6A + S-adenosyl-L-homocysteine. It functions in the pathway cofactor biosynthesis; adenosylcobalamin biosynthesis; cob(II)yrinate a,c-diamide from sirohydrochlorin (anaerobic route): step 6/10. Catalyzes the methylation of C-1 in cobalt-precorrin-5B to form cobalt-precorrin-6A. The chain is Cobalt-precorrin-5B C(1)-methyltransferase from Methanosphaera stadtmanae (strain ATCC 43021 / DSM 3091 / JCM 11832 / MCB-3).